A 118-amino-acid chain; its full sequence is Putative pterin-4-alpha-carbinolamine dehydratase (118 aa).

The protein belongs to the pterin-4-alpha-carbinolamine dehydratase family.

The enzyme catalyses (4aS,6R)-4a-hydroxy-L-erythro-5,6,7,8-tetrahydrobiopterin = (6R)-L-erythro-6,7-dihydrobiopterin + H2O. The sequence is that of Putative pterin-4-alpha-carbinolamine dehydratase from Xanthomonas campestris pv. campestris (strain 8004).